The sequence spans 383 residues: Putative glutamate--cysteine ligase 2 (383 aa).

The protein belongs to the glutamate--cysteine ligase type 2 family. YbdK subfamily.

It catalyses the reaction L-cysteine + L-glutamate + ATP = gamma-L-glutamyl-L-cysteine + ADP + phosphate + H(+). Its function is as follows. ATP-dependent carboxylate-amine ligase which exhibits weak glutamate--cysteine ligase activity. In Clavibacter michiganensis subsp. michiganensis (strain NCPPB 382), this protein is Putative glutamate--cysteine ligase 2.